The chain runs to 440 residues: Probable carboxypeptidase AFUB_072730 (440 aa).

The signal sequence occupies residues 1–16; that stretch reads MKPLTSLLLSAALSAA. Residues Asn-87 and Asn-149 are each glycosylated (N-linked (GlcNAc...) asparagine). Asp-165 is a binding site for Zn(2+). Glu-197 functions as the Proton acceptor in the catalytic mechanism. Zn(2+) is bound at residue Glu-198. Residues Asn-353 and Asn-372 are each glycosylated (N-linked (GlcNAc...) asparagine).

This sequence belongs to the peptidase M20A family. Requires Zn(2+) as cofactor.

It is found in the secreted. In Aspergillus fumigatus (strain CBS 144.89 / FGSC A1163 / CEA10) (Neosartorya fumigata), this protein is Probable carboxypeptidase AFUB_072730.